The following is a 232-amino-acid chain: U-scoloptoxin(11)-Sa3a (232 aa).

The N-terminal stretch at 1–21 is a signal peptide; the sequence is MFQFCLLILLLAPGRFFSALG.

This sequence belongs to the scoloptoxin-11 family. In terms of processing, contains 8 disulfide bonds. In terms of tissue distribution, expressed by the venom gland.

The protein resides in the secreted. The polypeptide is U-scoloptoxin(11)-Sa3a (Scolopendra alternans (Florida Keys giant centipede)).